A 930-amino-acid polypeptide reads, in one-letter code: Progesterone receptor (930 aa).

Residues 1–11 (MTELKAKEPRA) show a composition bias toward basic and acidic residues. 2 disordered regions span residues 1 to 133 (MTEL…ASPA) and 148 to 260 (LPED…SGAA). The interval 1-165 (MTELKAKEPR…PATKGVLAPL (165 aa)) is AF3; mediates transcriptional activation. A modulating, Pro-Rich region spans residues 1–565 (MTELKAKEPR…PQYSFESLPQ (565 aa)). A Glycyl lysine isopeptide (Lys-Gly) (interchain with G-Cter in SUMO) cross-link involves residue K7. S20 bears the Phosphoserine mark. Residues 38–49 (QGSQTSEASSVV) are compositionally biased toward polar residues. Positions 56–60 (LDGLL) match the LXXL motif 1 motif. The residue at position 82 (S82) is a Phosphoserine. The short motif at 116-120 (LDTLL) is the LXXL motif 2 element. S131 bears the Phosphoserine mark. Residues 166-304 (MSRPEDKAGD…LATSVVDFIH (139 aa)) are mediates transcriptional transrepression. Residues 184 to 188 (KVLPR) carry the Nuclear localization signal motif. Low complexity predominate over residues 187 to 204 (PRGLSPSRQLLLPSSGSP). 2 positions are modified to phosphoserine: S191 and S212. S293 is subject to Phosphoserine; by MAPK1. Residues 334 to 356 (AASPFVPQRGSPSASSTPVAGGD) are disordered. S344 carries the phosphoserine; by MAPK modification. K387 is covalently cross-linked (Glycyl lysine isopeptide (Lys-Gly) (interchain with G-Cter in SUMO); alternate). Residue K387 forms a Glycyl lysine isopeptide (Lys-Gly) (interchain with G-Cter in ubiquitin); alternate linkage. S399 is subject to Phosphoserine; by CDK2. The segment at 415–454 (DFQLAAPPPPSLPPRVPSSRPGEAAVAASPGSASVSSSSS) is disordered. The span at 420–430 (APPPPSLPPRV) shows a compositional bias: pro residues. Over residues 431-454 (PSSRPGEAAVAASPGSASVSSSSS) the composition is skewed to low complexity. The segment at 457 to 547 (STLECILYKA…VYTPYLNYLR (91 aa)) is AF1; mediates transcriptional activation. K532 is covalently cross-linked (Glycyl lysine isopeptide (Lys-Gly) (interchain with G-Cter in SUMO)). Positions 566–640 (KICLICGDEA…AGMVLGGRKF (75 aa)) form a DNA-binding region, nuclear receptor. 2 consecutive NR C4-type zinc fingers follow at residues 568–588 (CLIC…CGSC) and 604–628 (CAGR…LRKC). S673 is modified (phosphoserine). Residues 676–910 (QEIQLIPPLI…EFPEMMSEVI (235 aa)) enclose the NR LBD domain. An AF2; mediates transcriptional activation region spans residues 684-930 (LINLLMSIEP…MVKPLLFHKK (247 aa)). R763 is a binding site for progesterone.

It belongs to the nuclear hormone receptor family. NR3 subfamily. In terms of assembly, interacts with SMARD1 and UNC45A. Interacts with CUEDC2; the interaction promotes ubiquitination, decreases sumoylation, and represses transcriptional activity. Interacts with PIAS3; the interaction promotes sumoylation of PR in a hormone-dependent manner, inhibits DNA-binding, and alters nuclear export. Interacts with SP1; the interaction requires ligand-induced phosphorylation on Ser-344 by ERK1/2-MAPK. Interacts with PRMT2. Interacts with NCOA2 and NCOA1. Interacts with KLF9. Interacts with GTF2B. In terms of processing, phosphorylated on multiple serine sites. Several of these sites are hormone-dependent. Phosphorylation on Ser-293 is highly hormone-dependent and modulates ubiquitination and sumoylation on Lys-387. Phosphorylation on Ser-102 and Ser-344 also requires induction by hormone. Basal phosphorylation on Ser-82, Ser-191 and Ser-399 is increased in response to progesterone and can be phosphorylated in vitro by the CDK2-A1 complex. Increased levels of phosphorylation on Ser-399 also in the presence of EGF, heregulin, IGF, PMA and FBS. Phosphorylation at this site by CDK2 is ligand-independent, and increases nuclear translocation and transcriptional activity. Phosphorylation at Ser-293, but not at Ser-191, is impaired during the G(2)/M phase of the cell cycle. Phosphorylation on Ser-344 by ERK1/2 MAPK is required for interaction with SP1. Post-translationally, sumoylation is hormone-dependent and represses transcriptional activity. Sumoylation on all three sites is enhanced by PIAS3. Desumoylated by SENP1. Sumoylation on Lys-387, the main site of sumoylation, is repressed by ubiquitination on the same site, and modulated by phosphorylation at Ser-293. Ubiquitination is hormone-dependent and represses sumoylation on the same site. Promoted by MAPK-mediated phosphorylation on Ser-293. Ubiquitinated by UBR5, leading to its degradation: UBR5 specifically recognizes and binds ligand-bound PGR when it is not associated with coactivators (NCOAs). In presence of NCOAs, the UBR5-degron is not accessible, preventing its ubiquitination and degradation. In terms of processing, palmitoylated by ZDHHC7 and ZDHHC21. Palmitoylation is required for plasma membrane targeting and for rapid intracellular signaling via ERK and AKT kinases and cAMP generation.

The protein localises to the nucleus. It is found in the cytoplasm. Functionally, the steroid hormones and their receptors are involved in the regulation of eukaryotic gene expression and affect cellular proliferation and differentiation in target tissues. Transcriptional activator of several progesteron-dependent promoters in a variety of cell types. Involved in activation of SRC-dependent MAPK signaling on hormone stimulation. The polypeptide is Progesterone receptor (PGR) (Oryctolagus cuniculus (Rabbit)).